A 123-amino-acid polypeptide reads, in one-letter code: Omega-oxotoxin-Ot1a (123 aa).

An N-terminal signal peptide occupies residues 1–16 (MKIVLVFVCTLYLAQA). The propeptide occupies 17–54 (TYLSEQDVNEVSEFLEALDQANEAASEMVEAAETEEAR). In terms of domain architecture, Oxytoxin-type inhibitor cystine knot (ICK) spans 55 to 122 (DWECLPLHSS…GKINTCDKYK (68 aa)). Cystine bridges form between cysteine 58–cysteine 72, cysteine 65–cysteine 77, cysteine 69–cysteine 118, cysteine 71–cysteine 106, and cysteine 79–cysteine 104.

This sequence belongs to the spiderine family. Spiderine subfamily. Post-translationally, mass spectrometry data suggest a carboxylated free C-terminal residue. In terms of tissue distribution, expressed by the venom gland.

It localises to the secreted. Its function is as follows. Weak blocker of vertebrate P/Q-, N- and L-type voltage-gated calcium channels (Cav1 and Cav2). Is both paralytic and lethal when injected into lepidopteran larvae. Is not toxic to mice. The chain is Omega-oxotoxin-Ot1a from Oxyopes takobius (Lynx spider).